The following is a 559-amino-acid chain: Intestinal-type alkaline phosphatase (559 aa).

The N-terminal stretch at 1–19 (MQGPWVLLLLGLRLQLSLS) is a signal peptide. Asp-61 lines the Mg(2+) pocket. Zn(2+) contacts are provided by Asp-61 and Ser-111. The Phosphoserine intermediate role is filled by Ser-111. Cys-140 and Cys-202 form a disulfide bridge. A glycan (N-linked (GlcNAc...) asparagine) is linked at Asn-141. Ser-174 contributes to the Mg(2+) binding site. Ca(2+) is bound at residue Glu-235. N-linked (GlcNAc...) asparagine glycosylation occurs at Asn-241. Ca(2+) contacts are provided by Phe-288, Glu-289, and Asp-304. Glu-330 lines the Mg(2+) pocket. Zn(2+) contacts are provided by Asp-335, His-339, Asp-376, and His-377. N-linked (GlcNAc...) asparagine glycosylation is present at Asn-426. His-450 contacts Zn(2+). A disulfide bond links Cys-485 and Cys-492. The interval 496-531 (PPADESQTTTTTRQTTITTTTTTTTTTTTPVHNSAR) is disordered. Positions 503–524 (TTTTTRQTTITTTTTTTTTTTT) are enriched in low complexity. Asn-528 is lipidated: GPI-anchor amidated asparagine. Residues 529-559 (SARSLGPATAPLALALLAGMLMLLLGAPAES) constitute a propeptide, removed in mature form.

The protein belongs to the alkaline phosphatase family. In terms of assembly, homodimer. It depends on Mg(2+) as a cofactor. Requires Zn(2+) as cofactor. Ca(2+) serves as cofactor. Intestine and thymus.

The protein resides in the cell membrane. It catalyses the reaction a phosphate monoester + H2O = an alcohol + phosphate. Its function is as follows. Alkaline phosphatase that can hydrolyze various phosphate compounds. The polypeptide is Intestinal-type alkaline phosphatase (Iap) (Mus musculus (Mouse)).